The following is a 203-amino-acid chain: Probable GTP-binding protein EngB (203 aa).

Residues 24-199 form the EngB-type G domain; that stretch reads DGSEVAFAGR…HTVIETWLGL (176 aa). GTP is bound by residues 32 to 39, 59 to 63, 77 to 80, 144 to 147, and 178 to 180; these read GRSNAGKS, GRTQQ, DLPG, TKAD, and FSS. Mg(2+)-binding residues include Ser39 and Thr61.

It belongs to the TRAFAC class TrmE-Era-EngA-EngB-Septin-like GTPase superfamily. EngB GTPase family. It depends on Mg(2+) as a cofactor.

Functionally, necessary for normal cell division and for the maintenance of normal septation. In Xylella fastidiosa (strain Temecula1 / ATCC 700964), this protein is Probable GTP-binding protein EngB.